The sequence spans 457 residues: Multidrug resistance protein MdtK (457 aa).

12 helical membrane-spanning segments follow: residues 11–31 (LLAL…MGFV), 53–73 (IWLP…PVIA), 93–113 (WLAG…GYII), 127–147 (AVGY…FQVA), 160–180 (GMVM…IFIY), 189–209 (GGVG…LAMV), 243–263 (LPIA…ALLV), 276–296 (IALN…AAVT), 314–334 (AART…IFTV), 350–370 (VVTL…SDSI), 387–407 (IFYI…YILA), and 418–438 (PAGF…MMML).

This sequence belongs to the multi antimicrobial extrusion (MATE) (TC 2.A.66.1) family. MdtK subfamily.

The protein localises to the cell inner membrane. Functionally, multidrug efflux pump that functions probably as a Na(+)/drug antiporter. In Escherichia coli O9:H4 (strain HS), this protein is Multidrug resistance protein MdtK.